The sequence spans 370 residues: MKFVDEAYIDVIAGNGGNGCVSFRREKFIPFGGPNGGDGGRGGSVYAVADRNLNTLIDFRFARRHEARHGEHGRGSDQFGAAAEDIVMRMPVGTIISDAETGAPVAELLEPGERILIAKGGDGGFGNLHYKTSTNRAPRQKTPGWPGEQKKLKLELRVLADVGLLGMPNAGKSTLISAISNARPKIADYPFTTLHPNLGVVRVGPEQSFVVADVPGLIEGAAEGAGLGHRFLRHLQRTRLLLHMIDMAPFDDTDPVAQAKAIVAELKKYDPALYDKPRWLVLNKLDVVPAEERAARVKDFVKRFKWKGPVFEISALTREGCETLVQAIYQHVASYQTHYVDPDVRFAEPEADESDDEPRFAPQADDPRFR.

The 159-residue stretch at 1-159 (MKFVDEAYID…KKLKLELRVL (159 aa)) folds into the Obg domain. The OBG-type G domain occupies 160–333 (ADVGLLGMPN…LVQAIYQHVA (174 aa)). Residues 166-173 (GMPNAGKS), 191-195 (FTTLH), 213-216 (DVPG), 283-286 (NKLD), and 314-316 (SAL) contribute to the GTP site. Positions 173 and 193 each coordinate Mg(2+). Positions 346-370 (FAEPEADESDDEPRFAPQADDPRFR) are disordered.

Belongs to the TRAFAC class OBG-HflX-like GTPase superfamily. OBG GTPase family. Monomer. Mg(2+) serves as cofactor.

The protein resides in the cytoplasm. Functionally, an essential GTPase which binds GTP, GDP and possibly (p)ppGpp with moderate affinity, with high nucleotide exchange rates and a fairly low GTP hydrolysis rate. Plays a role in control of the cell cycle, stress response, ribosome biogenesis and in those bacteria that undergo differentiation, in morphogenesis control. The polypeptide is GTPase Obg (Methylibium petroleiphilum (strain ATCC BAA-1232 / LMG 22953 / PM1)).